The following is a 594-amino-acid chain: Class I diterpene synthase TPS6, chloroplastic (594 aa).

Residues Asp-330, Asp-334, Asn-474, Gln-477, and Glu-482 each coordinate Mg(2+). The DDXXD motif signature appears at 330–334; it reads DDFFD.

It belongs to the terpene synthase family. Mg(2+) is required as a cofactor. In terms of tissue distribution, mostly expressed in trichomes of leaves and fruits.

Its subcellular location is the plastid. It is found in the chloroplast. The enzyme catalyses peregrinol diphosphate = labd-13(16),14-diene-9-ol + diphosphate. The catalysed reaction is 9alpha-copalyl diphosphate = syn-isopimara-7,15-diene + diphosphate. Its pathway is secondary metabolite biosynthesis; terpenoid biosynthesis. In terms of biological role, involved in the biosynthesis of labdane-type diterpenoid including cleroda-dienols, and peregrinol lactones and furan derivatives, dopaminergic diterpenoids that can bind to dopamine receptors in the human pituitary gland, have probably ability to lower prolactin levels, and are used to treat menstrual cycle disorders (e.g. premenstrual syndrome and mastodynia). Terpene synthase the catalyzes the conversion of peregrinol diphosphate to labda-13(16),14-dien-9-ol, and of syn-copalyl diphosophate to dehydroabietadiene and syn-isopimara-7,15-diene. This chain is Class I diterpene synthase TPS6, chloroplastic, found in Vitex agnus-castus (Chaste tree).